The chain runs to 1067 residues: FHIP family protein GL19323 (1067 aa).

Polar residues predominate over residues 1 to 11; that stretch reads MSWLRSSPLRQ. Disordered stretches follow at residues 1–31, 503–525, and 832–1013; these read MSWLRSSPLRQSGNGGGGGVSTGHSSTGSLR, LARPKSVHEQQPPSGATGEQPIQ, and NENS…SEPA. Residues Ser-508 and Ser-835 each carry the phosphoserine modification. Residues 842–858 show a composition bias toward low complexity; that stretch reads QPQTTLSQQQQQQQGQQ. A compositionally biased stretch (polar residues) spans 859–878; it reads RSAYATLSAATPVQATQTSA. Residues 893 to 904 are compositionally biased toward low complexity; that stretch reads SKSISSMFSRRS. Positions 918 to 949 are enriched in polar residues; that stretch reads LVGNNNSGSGQSQPFSSTGTGTCETSLSTNPQ. Positions 950 to 979 are enriched in low complexity; the sequence is SGAAAARSTGTATTANGNSSNSNISIGGST. Residues 980 to 996 are compositionally biased toward polar residues; that stretch reads QTLSGHSNTTTYSSSTL.

The protein belongs to the FHIP family.

The sequence is that of FHIP family protein GL19323 from Drosophila persimilis (Fruit fly).